The chain runs to 448 residues: Methylenetetrahydrofolate--tRNA-(uracil-5-)-methyltransferase TrmFO (448 aa).

13–18 (GAGLAG) is an FAD binding site.

The protein belongs to the MnmG family. TrmFO subfamily. FAD is required as a cofactor.

The protein localises to the cytoplasm. The enzyme catalyses uridine(54) in tRNA + (6R)-5,10-methylene-5,6,7,8-tetrahydrofolate + NADH + H(+) = 5-methyluridine(54) in tRNA + (6S)-5,6,7,8-tetrahydrofolate + NAD(+). It carries out the reaction uridine(54) in tRNA + (6R)-5,10-methylene-5,6,7,8-tetrahydrofolate + NADPH + H(+) = 5-methyluridine(54) in tRNA + (6S)-5,6,7,8-tetrahydrofolate + NADP(+). Catalyzes the folate-dependent formation of 5-methyl-uridine at position 54 (M-5-U54) in all tRNAs. The protein is Methylenetetrahydrofolate--tRNA-(uracil-5-)-methyltransferase TrmFO of Streptococcus pyogenes serotype M28 (strain MGAS6180).